Reading from the N-terminus, the 186-residue chain is Pyridoxal 5'-phosphate synthase subunit PdxT (186 aa).

46–48 (GES) is a binding site for L-glutamine. The active-site Nucleophile is the cysteine 75. L-glutamine-binding positions include arginine 101 and 127 to 128 (IR). Active-site charge relay system residues include histidine 164 and glutamate 166.

This sequence belongs to the glutaminase PdxT/SNO family. In terms of assembly, in the presence of PdxS, forms a dodecamer of heterodimers. Only shows activity in the heterodimer.

The catalysed reaction is aldehydo-D-ribose 5-phosphate + D-glyceraldehyde 3-phosphate + L-glutamine = pyridoxal 5'-phosphate + L-glutamate + phosphate + 3 H2O + H(+). The enzyme catalyses L-glutamine + H2O = L-glutamate + NH4(+). It participates in cofactor biosynthesis; pyridoxal 5'-phosphate biosynthesis. Catalyzes the hydrolysis of glutamine to glutamate and ammonia as part of the biosynthesis of pyridoxal 5'-phosphate. The resulting ammonia molecule is channeled to the active site of PdxS. The chain is Pyridoxal 5'-phosphate synthase subunit PdxT from Methanococcus aeolicus (strain ATCC BAA-1280 / DSM 17508 / OCM 812 / Nankai-3).